The primary structure comprises 290 residues: Glycine--tRNA ligase alpha subunit (290 aa).

Belongs to the class-II aminoacyl-tRNA synthetase family. In terms of assembly, tetramer of two alpha and two beta subunits.

The protein resides in the cytoplasm. It catalyses the reaction tRNA(Gly) + glycine + ATP = glycyl-tRNA(Gly) + AMP + diphosphate. The chain is Glycine--tRNA ligase alpha subunit from Synechococcus sp. (strain CC9902).